An 880-amino-acid chain; its full sequence is MDTAEIRRRFLNHFSERGHTVVPSASLVAQDPTLLLVNAGMVPFKPYFLGDLKAPWNRATSVQKCVRTVDIDNVGRTARHASFFQMCGNFSFGDYFKAEAIPFAFELIVDGYGFNPDDLWATVYLDDDEAEAIWRTLLPAERIQRRGKKDNFWSMGVPGPCGPCSEIYFDRGPAYGREGGPEADEDRYLEIWNLVFMQFARGEGSEYGYEIVGDLPARNIDTGMGLERMATILQGVENLYEIDISRPVLDAAGRLTGTRYGADPDSDVRLRVVADHTRTAAMLISDGVSPSNEGRGYVLRRMLRRAVRDARLLGAREPVMDELFGVVRAAMGPIYPELVDQAEAITAVAVAEETAFLETLRTGTTLFDTAVTQARSSGSSQLSGESAFRLHDTYGFPIDLTMDMAADAGLTVDEAGFRRLMERQRQAAKADRASRRIGNLDLSAFRPILAASGPTTFTGYTELGRESGIVGIVGIGDGDSLTAAGEGEEVGILLDATPFYAESGGQEADLGRIRFDGGEAEVLDVQRPVPDLVMHRVKVLGGELRVGADVFAEVDVERRRAVSRSHTATHLVHTAFRRALGESATQAGSLNSPGRLRFDFHALGAVPDSVLADVEDEVNEIALRDLEVRWYVTSQEEARRLGAMALFGEKYGDRVRVVDVGDYARELCGGTHVASSAQLGAIKLLSESSISAGTRRVEALVGMDAFRFLAREHVLVSQLSSTLKARPDELADRVADIVGRLRDAEKELERLRAQAVLAGSAALAAGAEDVGGVALVTAQVPAGTPADDVRLLALDVRGRLAGRPAVVAVVEAAGAAVVVATDETARTRGLRAGDLVRHSWAALGGKGGGKPDVAQGGRGDADMIPKVFARLRELVADQSA.

The Zn(2+) site is built by His566, His570, Cys668, and His672.

It belongs to the class-II aminoacyl-tRNA synthetase family. The cofactor is Zn(2+).

The protein resides in the cytoplasm. The enzyme catalyses tRNA(Ala) + L-alanine + ATP = L-alanyl-tRNA(Ala) + AMP + diphosphate. Its function is as follows. Catalyzes the attachment of alanine to tRNA(Ala) in a two-step reaction: alanine is first activated by ATP to form Ala-AMP and then transferred to the acceptor end of tRNA(Ala). Also edits incorrectly charged Ser-tRNA(Ala) and Gly-tRNA(Ala) via its editing domain. The polypeptide is Alanine--tRNA ligase (Parafrankia sp. (strain EAN1pec)).